The primary structure comprises 4776 residues: MTETVEDKVSHSITGLDILKGIVAAGAVISGTVATQTKVFTNESAVLEKTVEKTDALATNDTVVLGTISTSNSASSTSLSASESASTSASESASTSASTSASTSASESASTSASTSISASSTVVGSQTAAATEATAKKVEEDRKKPASDYVASVTNVNLQSYAKRRKRSVDSIEQLLASIKNAAVFSGNTIVNGAPAINASLNIAKSETKVYTGEGVDSVYRVPIYYKLKVTNDGSKLTFTYTVTYVNPKTNDLGNISSMRPGYSIYNSGTSTQTMLTLGSDLGKPSGVKNYITDKNGRQVLSYNTSTMTTQGSGYTWGNGAQMNGFFAKKGYGLTSSWTVPITGTDTSFTFTPYAARTDRIGINYFNGGGKVVESSTTSQSLSQSKSLSVSASQSASASASTSASASASTSASASASTSASASASTSASVSASTSASASASTSASASASTSASESASTSASASASTSASASASTSASASASTSASESASTSASASASTSASESASTSASASASTSASASASTSASGSASTSTSASASTSASASASTSASASASISASESASTSASESASTSTSASASTSASESASTSASASASTSASASASTSASASASTSASASTSASESASTSASASASTSASASASTSASASASTSASASASTSASVSASTSASASASTSASASASTSASESASTSASASASTSASASASTSASASASTSASASASTSASASASTSASESASTSASASASTSASASASTSASASASTSASASASTSASASASISASESASTSASASASTSASASASTSASASASTSASESASTSASASASTSASASASTSASASASTSASASASTSASASASTSASASASTSASESASTSASASASTSASESASTSASASASTSASASASTSASASASTSASASASTSASASASTSASASASTSASASTSASESASTSASASASTSASASASTSASASASTSASESASTSASASASTSASASASTSASASASTSASASASTSASASASISASESASTSASASASTSASVSASTSASASASTSASESASTSASASASTSASESASTSASASASTSASASASISASESASTSASASASTSASASASTSASASASTSASESASTSTSASASTSASESASTSASASASTSASASASTSASASASTSASASASTSASASTSASESASTSASASASTSASASASTSASASASTSASASASTSASASASTSASASASTSASASASTSASASASTSASESASTSASASASTSASASASTSASASASTSASASASTSASVSASTSASESASTSASASASTSASASASTSASESASTSASASASTSASESASTSASASASTSASASASTSASASASTSASASASTSASASASTSASASASTSASASASTSASASASTSASASASTSASASASTSASASASTSASASASTSASASASISASESASTSASASASTSASASASTSASVSASTSASASASTSASASASISASESASTSASASASTSASASASTSASASASTSASASASISASESASTSASASASTSASASASTSASASASTSASASASTSASASASTSASASASTSASASASTSASASASTSASASASTSASESASTSASASASTSASASASTSASASASTSASVSASTSASESASTSASASASTSASASASTSASASASTSASESASTSASASASTSASASASTSASESASTSASASASTSASASASTSASASASTSASASASASTSASASASTSASASASTSASASASISASESASTSASESASTSTSASASTSASESASTSASASASTSASASASTSASASASTSASASTSASESASTSASASASTSASASASTSASASASTSASASASTSASASASTSASVSASTSASASASTSASASASTSASESASTSASASASTSASASASTSASASASTSASASASTSASASASTSASESASTSASASASTSASASASTSASASASTSASASASTSASASASISASESASTSASASASTSASASASTSASASASTSASESASTSASASASTSASASASTSASASASTSASASASTSASASASTSASASASTSASESASTSASASASTSASESASTSASASASTSASASASTSASASASTSASASASTSASASASTSASASASTSASASTSASESASTSASASASTSASASASTSASASASTSASESASTSASASASTSASASASTSASASASTSASASASTSASASASISASESASTSASASASTSASVSASTSASASASTSASESASTSASASASTSASESASTSASASASTSASASASISASESASTSASASASTSASASASTSASASASTSASESASTSTSASASTSASESASTSASASASTSASASASTSASASASTSASASASTSASASTSASESASTSASASASTSASASASTSASASASTSASASASTSASASASTSASASASTSASASASTSASASASTSASASASTSASASASTSASASASTSASESASTSASASASTSASASASTSASASASTSASVSASTSASESASTSASASASTSASASASTSASASASTSASESASTSASASASTSASASASTSASESASTSASASASTSASASASTSASASASTSASASASASTSASASASTSASASASTSASASASISASESASTSASASASASTSASASASTSASASASTSASASASISASESASTSASESASTSTSASASTSASESASTSASASASTSASASASTSASASASTSASASTSASESASTSASASASTSASASASTSASASASTSASASASTSASASASTSASVSASTSASASASTSASASASTSASESASTSASASTSASESASTSASASASTSASASASTSASASASTSASESASTSASASASTSASASASTSASESASTSASASASTSASASASTSASASASTSASESASTSASASASTSASESASTSASASASTSASASASTSASGSASTSTSASASTSASASASTSASASASISASESASTSASESASTSTSASASTSASESASTSASASASTSASASASTSASASASTSASASTSASESASTSASASASTSASASASTSASASASTSASASASTSASVSASTSASASASTSASASASTSASESASTSASASASTSASASASTSASASASTSASASASTSASASASTSASESASTSASASASTSASASASTSASASASTSASASASTSASASASISASESASTSASASASTSASASASTSASASASTSASESASTSASASASTSASASASTSASASASTSASASASTSASASASTSASASASTSASESASTSASASASTSASESASTSASASASTSASASASTSASASASTSASASASTSASASASTSASASASTSASASTSASESASTSASASASTSASASASTSASASASTSASESASTSASASASTSASASASTSASASASTSASASASTSASASASISASESASTSASASASTSASVSASTSASASASTSASESASTSASASASTSASESASTSASASASTSASASASISASESASTSASASASTSASASASTSASASASTSASESASTSTSASASTSASESASTSASASASTSASASASTSASASASTSASASASTSASASTSASESASTSASASASTSASASASTSASASASTSASASASTSASASASTSASASASTSASASASTSASASASTSASESASTSASASASTSASASASTSASASASTSASASASTSASVSASTSASESASTSASASASTSASASASTSASESASTSASASASTSASESASTSASASASTSASASASTSASASASTSASASASTSASASASTSASASASTSASASASTSASASASTSASASASTSASASASTSASASASTSASASASTSASASASISASESASTSASASASTSASASASTSASVSASTSASASASTSASASASISASESASTSASASASTSASASASTSASASASTSASASASISASESASTSASASASTSASASASTSASASASTSASASASTSASASASTSASASASTSASASASTSASASASTSASASASTSASESASTSASASASTSASASASISASESASTSASASASTSASASASTSASASASTSASESASTSTSASASTSASESASTSASASASTSASASASTSASASASTSASASASTSASASTSASESASTSASASASTSASASASTSASASASTSASASASTSASASASTSASASASTSASASASTSASASASTSASESASTSASASASTSASASASTSASASASTSASASASTSASVSASTSASESASTSASASASTSASASASTSASESASTSASASASTSASESASTSASASASTSASASASTSASASASTSASASASTSASASASTSASASASTSASASASTSASASASTSASASASTSASASASTSASASASTSASASASTSASASASISASESASTSASASASTSASASASTSASVSASTSASASASTSASASASISASESASTSASASASTSASASASTSASASASTSASASASISASESASTSASASASTSASASASTSASASASTSASASASTSASASASTSASASASTSASASASTSASASASTSASASASTSASASASTSASASASTSASASASTSASASASTSASASASTSVSNSANHSNSQVGNTSGSTGKSQKELPNTGTESSIGSVLLGVLAAVTGIGLVAKRRKRDEEE.

Residues 1–72 (MTETVEDKVS…VVLGTISTSN (72 aa)) form the signal peptide. Ser-73, Ser-75, Ser-76, Ser-78, Ser-80, Ser-82, Ser-94, Ser-100, Ser-108, Ser-110, Ser-118, Ser-120, and Ser-121 each carry an O-linked (GlcNAc...) serine glycan. A serine-rich repeat region 1, SRR1 region spans residues 73-121 (SASSTSLSASESASTSASESASTSASTSASTSASESASTSASTSISASS). The interval 86–112 (STSASESASTSASTSASTSASESASTS) is disordered. Residues 122–166 (TVVGSQTAAATEATAKKVEEDRKKPASDYVASVTNVNLQSYAKRR) are self aggregating domain. Positions 122 to 394 (TVVGSQTAAA…QSKSLSVSAS (273 aa)) are basic region, BR. Positions 164-168 (KRRKR) match the Host furin cleavage recognition motif. Residues 273-341 (TQTMLTLGSD…GYGLTSSWTV (69 aa)) are keratin 10-binding domain, cell-type specific binding to lung-derived cells. The serine-rich repeat region 2, SRR2 stretch occupies residues 395–4712 (QSASASASTS…ASTSASASAS (4318 aa)). Disordered regions lie at residues 481–627 (ASTS…STSA), 861–889 (ASAS…SAST), 925–965 (ASAS…SASA), 1052–1085 (SAST…SASA), 1123–1153 (ASAS…STSA), 1171–1199 (ASAS…STSA), 1311–1357 (ASES…SAST), 1671–1731 (ASES…SESA), 1792–1863 (SASE…STSA), 2105–2133 (ASAS…SAST), 2169–2209 (ASAS…SASA), 2296–2329 (SAST…SASA), 2367–2397 (ASAS…STSA), 2415–2443 (ASAS…STSA), 2571–2631 (ASES…SESA), 2737–2805 (ESAS…STSA), 2855–3113 (ASAS…STSA), 3347–3375 (ASAS…SAST), 3411–3451 (ASAS…SASA), 3538–3571 (SAST…SASA), 3609–3639 (ASAS…STSA), 3657–3685 (ASAS…STSA), 3797–3843 (ASES…SAST), 4167–4197 (ASAS…STSA), 4215–4243 (ASAS…STSA), 4355–4401 (ASES…SAST), and 4706–4747 (SASA…GTES). Residues 4715–4747 (VSNSANHSNSQVGNTSGSTGKSQKELPNTGTES) show a composition bias toward polar residues. The LPXTG sorting signal motif lies at 4740–4744 (LPNTG). Position 4743 is a pentaglycyl murein peptidoglycan amidated threonine (Thr-4743). The propeptide at 4744 to 4776 (GTESSIGSVLLGVLAAVTGIGLVAKRRKRDEEE) is removed by sortase.

Belongs to the serine-rich repeat protein (SRRP) family. As to quaternary structure, binds to human and mouse protein keratin 10 (KRT10). Post-translationally, glycosylated. Only truncated substrates greater than 25 residues long are glycosylated by the Gtf1-Gtf2 complex in vitro; only Ser residues have been seen to be glycosylated. Based on electrophoretic mobility it is probable that most of the Ser residues in SSR1 and SSR2 are O-GlcNAcylated. Subsequent glycosylation by up to 7 sugar transferases (Gtf3 and GlyAT, GlyB, GlyD, GlyE, GlyF and GlyG) is able to generate very high sugar polymorphism. In terms of processing, can be cleaved by human furin protease; this fragment contributes to self-aggregation and possibly biofilm formation in vitro.

The protein resides in the secreted. Its subcellular location is the cell wall. It localises to the cell surface. In terms of biological role, protein that allows bacteria to adhere to mammalian host cells. Required for full virulence in mouse infection models when infected intranasally. Required for adhesion to host cells in vitro and for persistence in the lower respiratory tract. Binds host keratin 10 (KRT10) on lung cells which mediates adhesion via the C-terminus of the basic region (BR, residues 273-341); glycosylation of either protein is not required for the interaction. A region in the N-terminus (residues 122-166) self aggregates, contributing to mature biofilm formation. The basic region (BR, residues 187-385) also self aggregates; the BR binds DNA which enhances self aggregation. The chain is Pneumococcal serine-rich repeat protein from Streptococcus pneumoniae serotype 4 (strain ATCC BAA-334 / TIGR4).